A 124-amino-acid polypeptide reads, in one-letter code: Small ribosomal subunit protein uS13 (124 aa).

The disordered stretch occupies residues 95–124 (GLPVNGQRTRTNARSSKGPRRTVAGKKKAR). The span at 100-109 (GQRTRTNARS) shows a compositional bias: polar residues. Residues 111–124 (KGPRRTVAGKKKAR) are compositionally biased toward basic residues.

The protein belongs to the universal ribosomal protein uS13 family. As to quaternary structure, part of the 30S ribosomal subunit. Forms a loose heterodimer with protein S19. Forms two bridges to the 50S subunit in the 70S ribosome.

Located at the top of the head of the 30S subunit, it contacts several helices of the 16S rRNA. In the 70S ribosome it contacts the 23S rRNA (bridge B1a) and protein L5 of the 50S subunit (bridge B1b), connecting the 2 subunits; these bridges are implicated in subunit movement. Contacts the tRNAs in the A and P-sites. The chain is Small ribosomal subunit protein uS13 from Tropheryma whipplei (strain TW08/27) (Whipple's bacillus).